The chain runs to 123 residues: UPF0102 protein PFL_5073 (123 aa).

It belongs to the UPF0102 family.

The sequence is that of UPF0102 protein PFL_5073 from Pseudomonas fluorescens (strain ATCC BAA-477 / NRRL B-23932 / Pf-5).